The chain runs to 145 residues: Globin (145 aa).

N-acetylserine is present on serine 2. Residues 2–145 (SLSAAEADLV…IVAALKAAGK (144 aa)) enclose the Globin domain. Heme b is bound at residue histidine 96.

This sequence belongs to the globin family. As to quaternary structure, monomer.

The protein is Globin of Aplysia kurodai (Kuroda's sea hare).